A 142-amino-acid chain; its full sequence is Snaclec 2 (142 aa).

Positions 1-23 (MGRFIFVSFSLLVVFLSLSGTGA) are cleaved as a signal peptide. A disulfide bridge links C25 with C36. One can recognise a C-type lectin domain in the interval 32-139 (YEGHCYRVFQ…CSETHNVICK (108 aa)). Residue N43 is glycosylated (N-linked (GlcNAc...) asparagine). Disulfide bonds link C53–C138 and C115–C130.

Belongs to the snaclec family. Heterodimer; disulfide-linked. As to expression, expressed by the venom gland.

The protein localises to the secreted. Interferes with one step of hemostasis (modulation of platelet aggregation, or coagulation cascade, for example). The polypeptide is Snaclec 2 (Sistrurus catenatus edwardsii (Desert massasauga)).